The sequence spans 992 residues: RNA-binding protein 12 (992 aa).

An RRM 1 domain is found at 304–379 (LYVSVHGMPF…RYVEVSPATE (76 aa)). Phosphoserine occurs at positions 352 and 375. The segment at 393 to 424 (QSMGPSGQAHPPPQTLPRSKSPSGQKRSRSRS) is disordered. Positions 408-417 (LPRSKSPSGQ) are enriched in polar residues. Ser420, Ser422, and Ser424 each carry phosphoserine. The RRM 2 domain maps to 430 to 507 (FCVYLKGLPF…RFIQVHPITK (78 aa)). The residue at position 525 (Ser525) is a Phosphoserine. Residues 849 to 913 (FGGIPQNFGN…PGFGASSGKP (65 aa)) are disordered. Over residues 876-887 (LGSVPGHLSGPP) the composition is skewed to low complexity. Positions 916–992 (TIIKVQNMPF…GSRKVKLVLG (77 aa)) constitute an RRM 3 domain.

It localises to the nucleus. This Mus musculus (Mouse) protein is RNA-binding protein 12 (Rbm12).